A 622-amino-acid chain; its full sequence is Cilia- and flagella-associated protein 206 (622 aa).

It belongs to the CFAP206 family.

It is found in the cytoplasm. Its subcellular location is the cytoskeleton. The protein localises to the cilium axoneme. The protein resides in the cilium basal body. Its function is as follows. Essential for sperm motility and is involved in the regulation of the beating frequency of motile cilia on the epithelial cells of the respiratory tract. Required for the establishment of radial spokes in sperm flagella. The sequence is that of Cilia- and flagella-associated protein 206 from Bos taurus (Bovine).